A 461-amino-acid polypeptide reads, in one-letter code: Putative cytochrome P450 132 (461 aa).

Cys409 serves as a coordination point for heme.

Belongs to the cytochrome P450 family. The cofactor is heme.

This Mycobacterium tuberculosis (strain ATCC 25618 / H37Rv) protein is Putative cytochrome P450 132 (cyp132).